Here is a 1744-residue protein sequence, read N- to C-terminus: Probable disease resistance protein At4g19520 (1744 aa).

Residues 3–163 form the TIR 1 domain; it reads DGKEVYISFN…KIVADVRQKL (161 aa). Residue Glu80 is part of the active site. Residues 192 to 411 enclose the NB-ARC domain; it reads SLGIWGMAGI…VSEKEIFLDI (220 aa). LRR repeat units lie at residues 503–526, 557–581, 583–602, 603–626, 648–669, 670–692, 710–733, 734–754, 755–777, 779–802, 804–823, 824–846, 848–871, 892–915, 917–939, 941–963, 987–1010, 1011–1035, 1037–1059, and 1062–1086; these read YEDVKAINLDTSNLPFKGHIAFQH, PPELRLLHWTCYPLHSFPQNFGFQY, VELNMPCSKLKKLWGGTKNL, EVLKRITLSCSVQLLNVDELQYSP, LQHLRIVDLSTCKKIKSFPKVP, PSIRKLHLQGTGIRDLSSLNHSS, DHRKQVLKLKDSSHLGSLPDIVIF, ESLEVLDFSGCSELEDIQGFP, QNLKRLYLAKTAIKEVPSSLCHH, SKLVKLDMENCERLRDLPMGMSNM, YLAVLKLSGCSNLENIKELP, RNLKELYLAGTAVKEFPSTLLET, SEVVLLDLENCKKLQGLPTGMSKL, PLNLIELYLAGTAIRELPPSIGDL, LLDTLDLKNCNRLRHLPMEMHNL, PLKVLDLSNCSELEVFTSSLPKV, YEHRVTLSLYKARLQYIPEEIRWM, PSLKTLDLSRNGFTEVPVSIKDFSK, LSLRLRYCENLRSLPQLPRSLQL, and AHGCSSLQLITPDFKQLPRYYTFSN. The region spanning 1399 to 1559 is the TIR 2 domain; that stretch reads RNNDVFVSFH…KVANDIRKKL (161 aa).

Belongs to the disease resistance TIR-NB-LRR family.

The catalysed reaction is NAD(+) + H2O = ADP-D-ribose + nicotinamide + H(+). Its function is as follows. Probable disease resistance protein. The sequence is that of Probable disease resistance protein At4g19520 from Arabidopsis thaliana (Mouse-ear cress).